We begin with the raw amino-acid sequence, 715 residues long: Polyribonucleotide nucleotidyltransferase (715 aa).

The Mg(2+) site is built by aspartate 493 and aspartate 499. One can recognise a KH domain in the interval 560 to 619 (PRMITIKINPEKIRDVIGKGGSVIRALTEETGTTIDISDDGVVTIASTSSEGMAEAKKRI). Positions 629 to 697 (GQVYEGTVLK…EKGRVRLSAK (69 aa)) constitute an S1 motif domain.

This sequence belongs to the polyribonucleotide nucleotidyltransferase family. Mg(2+) is required as a cofactor.

The protein localises to the cytoplasm. It carries out the reaction RNA(n+1) + phosphate = RNA(n) + a ribonucleoside 5'-diphosphate. In terms of biological role, involved in mRNA degradation. Catalyzes the phosphorolysis of single-stranded polyribonucleotides processively in the 3'- to 5'-direction. The protein is Polyribonucleotide nucleotidyltransferase of Burkholderia multivorans (strain ATCC 17616 / 249).